The primary structure comprises 185 residues: MSCISEIGKFVKSIEYIKLPCLFIFAAIVGMNLSLLYCLLKGWKNVMIWGIETMLFGAIGIFFAWKKKLSWEHLVLLWSTIDAFFSMCLRSCTIIYFSMNPYMLCEILNARNVISCSLNTQKFFFIIVAASNVYSIFQLCGCLLMFNNIISIRPSERTEPEFNFDLEKGVAFASDSEFPEKSICI.

The protein is Meiotic expression up-regulated protein 31 (meu31) of Schizosaccharomyces pombe (strain 972 / ATCC 24843) (Fission yeast).